A 532-amino-acid polypeptide reads, in one-letter code: Intercellular adhesion molecule 1 (532 aa).

The first 27 residues, M1–A27, serve as a signal peptide directing secretion. The Extracellular portion of the chain corresponds to Q28 to E480. Ig-like C2-type domains lie at G41–A103 and G128–R193. N47 carries an N-linked (GlcNAc...) asparagine glycan. 2 disulfide bridges follow: C48-C92 and C52-C96. 2 N-linked (GlcNAc...) asparagine glycosylation sites follow: N130 and N145. A disulfide bridge links C135 with C186. Residues R152 to E154 carry the Cell attachment site; atypical motif. N-linked (GlcNAc...) asparagine glycosylation is found at N183, N202, N267, N296, and N316. The 68-residue stretch at D230–Q297 folds into the Ig-like C2-type 3 domain. A disulfide bond links C237 and C290. An Ig-like C2-type 4 domain is found at G325 to A378. C332 and C371 are joined by a disulfide. N-linked (GlcNAc...) asparagine glycans are attached at residues N385 and N406. 3 disulfide bridges follow: C403–C419, C419–C457, and C431–C457. In terms of domain architecture, Ig-like C2-type 5 spans N412–G464. Residues V481–Y503 form a helical membrane-spanning segment. Over N504–P532 the chain is Cytoplasmic. Residues R513–P532 form a disordered region. Positions Q515 to P532 are enriched in polar residues. Phosphothreonine occurs at positions 521 and 530.

This sequence belongs to the immunoglobulin superfamily. ICAM family. As to quaternary structure, homodimer. Interacts with MUC1 and promotes cell aggregation in epithelial cells. Interacts with ARHGEF26/SGEF. Interacts (on T cell side) with CD81, CD247 and CD9 at immunological synapses between antigen-presenting cells and T cells. In terms of processing, monoubiquitinated, which is promoted by MARCH9 and leads to endocytosis.

Its subcellular location is the membrane. In terms of biological role, ICAM proteins are ligands for the leukocyte adhesion protein LFA-1 (integrin alpha-L/beta-2). During leukocyte trans-endothelial migration, ICAM1 engagement promotes the assembly of endothelial apical cups through ARHGEF26/SGEF and RHOG activation. This is Intercellular adhesion molecule 1 (ICAM1) from Macaca mulatta (Rhesus macaque).